A 1451-amino-acid chain; its full sequence is Transcription elongation factor SPT6 (1451 aa).

Residues 1–12 (MEETGDSKLVPR) show a composition bias toward basic and acidic residues. The segment at 1 to 217 (MEETGDSKLV…EDDETRQRRI (217 aa)) is disordered. The Nuclear localization signal motif lies at 8 to 12 (KLVPR). The segment covering 29–51 (EEEEGEDVFDSSEEDEDIDEDED) has biased composition (acidic residues). The span at 76 to 85 (SKKRRKHKRR) shows a compositional bias: basic residues. A Nuclear localization signal motif is present at residues 77–85 (KKRRKHKRR). Residues 88-100 (EEDDRLSEDDLDL) show a composition bias toward acidic residues. A Phosphoserine modification is found at serine 94. Positions 120–125 (KRLKRV) match the Nuclear localization signal motif. A phosphoserine mark is found at serine 134, serine 136, serine 148, and serine 155. Positions 153-162 (FFSEDEEEEE) are enriched in acidic residues. Residues 180 to 192 (HENRNRTADKGGI) are compositionally biased toward basic and acidic residues. The segment covering 194–211 (DELDDFIEDDEFSDEDDE) has biased composition (acidic residues). Phosphoserine is present on residues serine 206 and serine 295. Residues 1257-1354 (PYYFPFNGRQ…RLLNEMTSSE (98 aa)) form the SH2 domain.

Belongs to the SPT6 family. Interacts with CTR9.

The protein localises to the nucleus. It localises to the chromosome. Its function is as follows. Histone H3-H4 chaperone that plays a role in maintenance of chromatin structure during RNA polymerase II transcription elongation thereby repressing transcription initiation from cryptic promoters. Mediates the reassembly of nucleosomes onto the promoters of at least a selected set of genes during repression; the nucleosome reassembly is essential for transcriptional repression. Essential for viability. The polypeptide is Transcription elongation factor SPT6 (SPT6) (Saccharomyces cerevisiae (strain ATCC 204508 / S288c) (Baker's yeast)).